The chain runs to 289 residues: Release factor glutamine methyltransferase (289 aa).

S-adenosyl-L-methionine contacts are provided by residues 130-134 (GTGTG), Asp153, Trp182, and Asn196. Position 196 to 199 (196 to 199 (NPPY)) interacts with substrate.

The protein belongs to the protein N5-glutamine methyltransferase family. PrmC subfamily.

The enzyme catalyses L-glutaminyl-[peptide chain release factor] + S-adenosyl-L-methionine = N(5)-methyl-L-glutaminyl-[peptide chain release factor] + S-adenosyl-L-homocysteine + H(+). Functionally, methylates the class 1 translation termination release factors RF1/PrfA and RF2/PrfB on the glutamine residue of the universally conserved GGQ motif. The polypeptide is Release factor glutamine methyltransferase (Agrobacterium fabrum (strain C58 / ATCC 33970) (Agrobacterium tumefaciens (strain C58))).